The primary structure comprises 130 residues: Small ribosomal subunit protein uS9 (130 aa).

Belongs to the universal ribosomal protein uS9 family.

The chain is Small ribosomal subunit protein uS9 from Shewanella amazonensis (strain ATCC BAA-1098 / SB2B).